Here is a 273-residue protein sequence, read N- to C-terminus: MLRVAGRRLSSSLSWRPAAAVARGPLAGAGVPDRDDDSARGRSQPRFSIDSPFFVASRGFSSTETVVPRNQDAGLADLPATVAAVKNPNPKVVYDEYNHERYPPGDPSKRAFAYFVLSGGRFIYASLLRLLVLKFVLSMSASKDVLALASLEVDLSSIEPGTTVTVKWRGKPVFIRRRTEDDIKLANSVDVASLRHPEQDAERVKNPEWLVVIGVCTHLGCIPLPNAGDFGGWFCPCHGSHYDISGRIRKGPAPFNLEVPTYSFLEENKLLVG.

The transit peptide at 1 to 61 directs the protein to the mitochondrion; the sequence is MLRVAGRRLS…PFFVASRGFS (61 aa). Residues 25–46 are disordered; it reads PLAGAGVPDRDDDSARGRSQPR. The Mitochondrial matrix segment spans residues 62 to 110; the sequence is STETVVPRNQDAGLADLPATVAAVKNPNPKVVYDEYNHERYPPGDPSKR. The helical transmembrane segment at 111–133 threads the bilayer; it reads AFAYFVLSGGRFIYASLLRLLVL. The Mitochondrial intermembrane segment spans residues 134–273; it reads KFVLSMSASK…FLEENKLLVG (140 aa). One can recognise a Rieske domain in the interval 176 to 271; that stretch reads RRRTEDDIKL…YSFLEENKLL (96 aa). Positions 216, 218, 235, and 238 each coordinate [2Fe-2S] cluster. A disulfide bridge links Cys221 with Cys237.

The protein belongs to the Rieske iron-sulfur protein family. Component of the ubiquinol-cytochrome c oxidoreductase (cytochrome b-c1 complex, complex III, CIII), a multisubunit enzyme composed of 3 respiratory subunits cytochrome b, cytochrome c1 and Rieske protein, 2 core protein subunits, and several low-molecular weight protein subunits. The complex exists as an obligatory dimer and forms supercomplexes (SCs) in the inner mitochondrial membrane with cytochrome c oxidase (complex IV, CIV). It depends on [2Fe-2S] cluster as a cofactor.

It is found in the mitochondrion inner membrane. It catalyses the reaction a quinol + 2 Fe(III)-[cytochrome c](out) = a quinone + 2 Fe(II)-[cytochrome c](out) + 2 H(+)(out). In terms of biological role, component of the ubiquinol-cytochrome c oxidoreductase, a multisubunit transmembrane complex that is part of the mitochondrial electron transport chain which drives oxidative phosphorylation. The respiratory chain contains 3 multisubunit complexes succinate dehydrogenase (complex II, CII), ubiquinol-cytochrome c oxidoreductase (cytochrome b-c1 complex, complex III, CIII) and cytochrome c oxidase (complex IV, CIV), that cooperate to transfer electrons derived from NADH and succinate to molecular oxygen, creating an electrochemical gradient over the inner membrane that drives transmembrane transport and the ATP synthase. The cytochrome b-c1 complex catalyzes electron transfer from ubiquinol to cytochrome c, linking this redox reaction to translocation of protons across the mitochondrial inner membrane, with protons being carried across the membrane as hydrogens on the quinol. In the process called Q cycle, 2 protons are consumed from the matrix, 4 protons are released into the intermembrane space and 2 electrons are passed to cytochrome c. The Rieske protein is a catalytic core subunit containing a [2Fe-2S] iron-sulfur cluster. It cycles between 2 conformational states during catalysis to transfer electrons from the quinol bound in the Q(0) site in cytochrome b to cytochrome c1. This chain is Cytochrome b-c1 complex subunit Rieske, mitochondrial, found in Zea mays (Maize).